Here is a 439-residue protein sequence, read N- to C-terminus: Secreted aspartic protease LUC8 (439 aa).

An N-terminal signal peptide occupies residues 1-20; that stretch reads MMHAFHHLAVLLIGSLPASA. N-linked (GlcNAc...) asparagine glycosylation is found at asparagine 33 and asparagine 54. Residues 51-435 form the Peptidase A1 domain; that stretch reads YLFNITVGTP…DFETQSFGLA (385 aa). Aspartate 69 is an active-site residue. N-linked (GlcNAc...) asparagine glycans are attached at residues asparagine 110, asparagine 126, asparagine 179, and asparagine 289. Residue aspartate 300 is part of the active site. N-linked (GlcNAc...) asparagine glycans are attached at residues asparagine 329 and asparagine 373. The cysteines at positions 355 and 391 are disulfide-linked.

Belongs to the peptidase A1 family.

It localises to the secreted. Functionally, secreted aspartic protease; part of the gene cluster that mediates the biosynthesis of the mycotoxin lucilactaene and the lucilactaene-related compound NG-391 that act as cell cycle inhibitors with potent growth inhibitory activity against malarial parasites, moderate growth inhibitory activity against cancer cells, and no activity against bacteria and fungi. Within the cluster, LUC7 and LUC8 encode proteins which are not commonly involved in the biosynthesis of secondary metabolites and are not essential for lucilactaene biosynthesis. The protein is Secreted aspartic protease LUC8 of Fusarium sp.